Consider the following 290-residue polypeptide: Protein EURL homolog (290 aa).

The disordered stretch occupies residues 185 to 206 (SHSQAQKTEETSSGPEGTIQTQ). Residues 228–251 (AKLQQRIQEVFEELTHQVQEKDSL) adopt a coiled-coil conformation.

It belongs to the EURL family. As to quaternary structure, interacts with CCDC85B. In terms of tissue distribution, expressed in brain (at protein level). Expressed in neural progenitor cells and postmitotic neurons of the embryonic cerebral cortex.

Its function is as follows. Plays a role in cortical progenitor cell proliferation and differentiation. Promotes dendritic spine development of post-migratory cortical projection neurons by modulating the beta-catenin signaling pathway. The protein is Protein EURL homolog of Mus musculus (Mouse).